Here is a 730-residue protein sequence, read N- to C-terminus: Replication restart protein PriA (730 aa).

Residues 212-378 (LLFHSGFNVW…QNGKYQHLVL (167 aa)) enclose the Helicase ATP-binding domain. ATP is bound at residue 225–232 (GVTGSGKT). The short motif at 321–324 (DEEH) is the DEAH box element. Zn(2+) is bound by residues Cys437, Cys440, Cys446, Cys449, Cys464, Cys467, Cys477, and Cys480. The Helicase C-terminal domain occupies 472–640 (TIPRQCGDCG…LPPFTFQALI (169 aa)).

This sequence belongs to the helicase family. PriA subfamily. Component of the replication restart primosome. Zn(2+) serves as cofactor.

It catalyses the reaction Couples ATP hydrolysis with the unwinding of duplex DNA by translocating in the 3'-5' direction.. The enzyme catalyses ATP + H2O = ADP + phosphate + H(+). Functionally, initiates the restart of stalled replication forks, which reloads the replicative helicase on sites other than the origin of replication. Recognizes and binds to abandoned replication forks and remodels them to uncover a helicase loading site. Promotes assembly of the primosome at these replication forks. This chain is Replication restart protein PriA, found in Haemophilus influenzae (strain ATCC 51907 / DSM 11121 / KW20 / Rd).